Consider the following 634-residue polypeptide: Probable potassium transport system protein Kup 2 (634 aa).

12 helical membrane passes run phenylalanine 20–leucine 40, valine 64–isoleucine 84, phenylalanine 110–isoleucine 130, proline 148–valine 168, alanine 174–alanine 194, alanine 224–alanine 244, tryptophan 258–leucine 278, leucine 290–isoleucine 310, isoleucine 348–phenylalanine 368, alanine 377–methionine 397, alanine 405–alanine 425, and isoleucine 430–threonine 450.

It belongs to the HAK/KUP transporter (TC 2.A.72) family.

Its subcellular location is the cell inner membrane. It carries out the reaction K(+)(in) + H(+)(in) = K(+)(out) + H(+)(out). Transport of potassium into the cell. Likely operates as a K(+):H(+) symporter. The protein is Probable potassium transport system protein Kup 2 of Rhodopseudomonas palustris (strain ATCC BAA-98 / CGA009).